Here is a 1835-residue protein sequence, read N- to C-terminus: Protein TIC 214 (1835 aa).

The next 6 membrane-spanning stretches (helical) occupy residues 25–45 (VGLYYGFLTTFSIGPSYLFLL), 64–84 (FITGQLMMFISIYYAPLHLAL), 87–107 (PHTITVLVLPYLLFHFFWNNH), 124–144 (LSIQCVFLNNLIFQLFNHFIL), 172–192 (VGWLIGHIFFMKWVGLVLFWI), and 221–241 (IFSILLFITCVYYLGRIPSPI). The span at 246 to 258 (LKETSETEERGES) shows a compositional bias: basic and acidic residues. 3 disordered regions span residues 246-304 (LKET…DGNQ), 735-759 (EFKTSDSEEKEAKEKEKTKEEKKEE), and 1535-1578 (NRNQ…KRQS). The segment covering 259-268 (AEETDVEIET) has biased composition (acidic residues). Basic and acidic residues predominate over residues 1553–1569 (PRNRQKDLEKDYAESDI).

Belongs to the TIC214 family. In terms of assembly, part of the Tic complex.

The protein localises to the plastid. Its subcellular location is the chloroplast inner membrane. Functionally, involved in protein precursor import into chloroplasts. May be part of an intermediate translocation complex acting as a protein-conducting channel at the inner envelope. This Liriodendron tulipifera (Tuliptree) protein is Protein TIC 214.